The chain runs to 86 residues: Molybdopterin synthase sulfur carrier subunit (86 aa).

Gly-86 carries the post-translational modification 1-thioglycine; alternate. A Glycyl adenylate; alternate modification is found at Gly-86.

Belongs to the MoaD family. MOCS2A subfamily. In terms of assembly, heterotetramer; composed of 2 small (mocs2s) and 2 large (mocs2l) subunits. In terms of processing, C-terminal thiocarboxylation occurs in 2 steps, it is first acyl-adenylated (-COAMP) via the hesA/moeB/thiF part of mocs3, then thiocarboxylated (-COSH) via the rhodanese domain of mocs3.

The protein resides in the cytoplasm. It participates in cofactor biosynthesis; molybdopterin biosynthesis. Functionally, acts as a sulfur carrier required for molybdopterin biosynthesis. Component of the molybdopterin synthase complex that catalyzes the conversion of precursor Z into molybdopterin by mediating the incorporation of 2 sulfur atoms into precursor Z to generate a dithiolene group. In the complex, serves as sulfur donor by being thiocarboxylated (-COSH) at its C-terminus by mocs3. After interaction with mocs2l, the sulfur is then transferred to precursor Z to form molybdopterin. The chain is Molybdopterin synthase sulfur carrier subunit (mocs2s) from Dictyostelium discoideum (Social amoeba).